The primary structure comprises 129 residues: MTGGKGKSGVAAVAQGASNSRSSKAGLTFPVGRVHRFLRNGNYAQRIGSSAPVYLASVLEYLTAEILELAGNAARDNKKSRIIPRHLQLAIRNDEELNKLLGQVTIAQGGVMPYIHQNLLPKKSGKAAV.

Lysine 5 carries the post-translational modification N6-acetyllysine. Glutamine 108 carries the N5-methylglutamine modification.

The protein belongs to the histone H2A family. As to quaternary structure, the nucleosome is a histone octamer containing two molecules each of H2A, H2B, H3 and H4 assembled in one H3-H4 heterotetramer and two H2A-H2B heterodimers. The octamer wraps approximately 147 bp of DNA. Post-translationally, acetylated by ESA1 to form H2AK4ac.

It is found in the nucleus. The protein resides in the chromosome. In terms of biological role, core component of nucleosome which plays a central role in DNA double strand break (DSB) repair. Nucleosomes wrap and compact DNA into chromatin, limiting DNA accessibility to the cellular machineries which require DNA as a template. Histones thereby play a central role in transcription regulation, DNA repair, DNA replication and chromosomal stability. DNA accessibility is regulated via a complex set of post-translational modifications of histones, also called histone code, and nucleosome remodeling. In Lodderomyces elongisporus (strain ATCC 11503 / CBS 2605 / JCM 1781 / NBRC 1676 / NRRL YB-4239) (Yeast), this protein is Histone H2A.2 (HTA2).